The sequence spans 259 residues: tRNA-cytidine(32) 2-sulfurtransferase (259 aa).

Residues 37–42 (SGGKDS) carry the PP-loop motif motif. Residues cysteine 112, cysteine 115, and cysteine 202 each coordinate [4Fe-4S] cluster.

This sequence belongs to the TtcA family. In terms of assembly, homodimer. Mg(2+) is required as a cofactor. It depends on [4Fe-4S] cluster as a cofactor.

It localises to the cytoplasm. The enzyme catalyses cytidine(32) in tRNA + S-sulfanyl-L-cysteinyl-[cysteine desulfurase] + AH2 + ATP = 2-thiocytidine(32) in tRNA + L-cysteinyl-[cysteine desulfurase] + A + AMP + diphosphate + H(+). It functions in the pathway tRNA modification. In terms of biological role, catalyzes the ATP-dependent 2-thiolation of cytidine in position 32 of tRNA, to form 2-thiocytidine (s(2)C32). The sulfur atoms are provided by the cysteine/cysteine desulfurase (IscS) system. In Syntrophotalea carbinolica (strain DSM 2380 / NBRC 103641 / GraBd1) (Pelobacter carbinolicus), this protein is tRNA-cytidine(32) 2-sulfurtransferase.